A 350-amino-acid polypeptide reads, in one-letter code: Protein RecA (350 aa).

ATP is bound at residue 67-74 (GPESSGKT).

This sequence belongs to the RecA family.

The protein localises to the cytoplasm. Can catalyze the hydrolysis of ATP in the presence of single-stranded DNA, the ATP-dependent uptake of single-stranded DNA by duplex DNA, and the ATP-dependent hybridization of homologous single-stranded DNAs. It interacts with LexA causing its activation and leading to its autocatalytic cleavage. This chain is Protein RecA, found in Wolinella succinogenes (strain ATCC 29543 / DSM 1740 / CCUG 13145 / JCM 31913 / LMG 7466 / NCTC 11488 / FDC 602W) (Vibrio succinogenes).